Reading from the N-terminus, the 1193-residue chain is Chloride channel protein 2 (1193 aa).

Topologically, residues 1–168 (MVYFGDRQRD…WIWRHTVARL (168 aa)) are cytoplasmic. A disordered region spans residues 76 to 97 (SHAFYPCPPPAENARDSDSSDD). The next 2 helical transmembrane spans lie at 169 to 204 (GEDW…IWLY) and 213 to 236 (VQYI…VHLI). A Selectivity filter part_1 motif is present at residues 242–246 (GSGIP). Chloride is bound at residue serine 243. The segment at residues 245 to 252 (IPEMKTIL) is an intramembrane region (helical). 2 helical membrane passes run 261 to 279 (LTFK…TLGS) and 286 to 304 (EGPF…SKLV). Residues 284–288 (GKEGP) carry the Selectivity filter part_2 motif. 2 consecutive intramembrane regions (helical) follow at residues 320–332 (MLAA…VGAC) and 336–344 (PVGGVLFSI). Helical transmembrane passes span 356–373 (YWRG…FRLL), 402–430 (LFVF…VLFM), 439–458 (FLQK…VSSI), 511–530 (FGNL…IAST), and 536–555 (GMFI…VGEF). The Selectivity filter part_3 motif lies at 536-540 (GMFIP). Phenylalanine 538 contributes to the chloride binding site. Positions 576 to 590 (GGYAVVGAAAFSGSV) form an intramembrane region, helical. Residues 591 to 592 (TH) constitute an intramembrane region (note=Loop between two helices). Residues 593–604 (TVSVAVIIFEMT) constitute an intramembrane region (helical). The note=Loop between two helices intramembrane region spans 605–609 (GQITH). Residues 610–626 (VVPVMIAVLVANAVAAL) form a helical membrane-spanning segment. Over 627 to 1193 (LQPSIYDSII…KSNTENGNHA (567 aa)) the chain is Cytoplasmic. Tyrosine 632 lines the chloride pocket. The 61-residue stretch at 663 to 723 (MVRDVKYIWH…KMIEKHIGRE (61 aa)) folds into the CBS 1 domain. 3 disordered regions span residues 848–884 (TLQD…VSKK), 1103–1122 (NSFV…AVEK), and 1159–1193 (IKHT…GNHA). Residues 1048 to 1105 (IDPSPFQLVERTSILKVHSLFSMVGINHAYVTKIGRLVGVVGLKELRKAIEDINSNSF) form the CBS 2 domain. A compositionally biased stretch (polar residues) spans 1165-1193 (GTVSLTMPPQESKQSPSADKSNTENGNHA).

It belongs to the chloride channel (TC 2.A.49) family. In terms of tissue distribution, at embryonic stages 13-16, expressed in a subset of the midline cells of the midline primordium and in all of the midline glia. Expressed along the Z-line of the sarcomere in larval longitudinal muscles.

The protein resides in the membrane. Voltage-gated chloride channel. Chloride channels have several functions including the regulation of cell volume; membrane potential stabilization, signal transduction and transepithelial transport. In Drosophila melanogaster (Fruit fly), this protein is Chloride channel protein 2 (ClC-a).